The following is a 64-amino-acid chain: Probable tautomerase lp_1712 (64 aa).

The Proton acceptor; via imino nitrogen role is filled by Pro2.

This sequence belongs to the 4-oxalocrotonate tautomerase family.

This Lactiplantibacillus plantarum (strain ATCC BAA-793 / NCIMB 8826 / WCFS1) (Lactobacillus plantarum) protein is Probable tautomerase lp_1712.